The chain runs to 232 residues: Orotidine 5'-phosphate decarboxylase (232 aa).

Residues Asp-13, Lys-35, 62–71 (DLKFHDIPNT), Thr-122, Arg-182, Gln-191, Gly-211, and Arg-212 contribute to the substrate site. Lys-64 (proton donor) is an active-site residue.

Belongs to the OMP decarboxylase family. Type 1 subfamily. In terms of assembly, homodimer.

The enzyme catalyses orotidine 5'-phosphate + H(+) = UMP + CO2. It functions in the pathway pyrimidine metabolism; UMP biosynthesis via de novo pathway; UMP from orotate: step 2/2. In terms of biological role, catalyzes the decarboxylation of orotidine 5'-monophosphate (OMP) to uridine 5'-monophosphate (UMP). The protein is Orotidine 5'-phosphate decarboxylase of Pseudomonas aeruginosa (strain LESB58).